Reading from the N-terminus, the 405-residue chain is MRGVIRKLNDDGFGVLKGILVPFSAPGDEIIVERVERVKKRRVASQWKLVRSSPLRVGPRCKAFGKCGGCTLQHLNYDYQLEFKRKKLKRILGFEVEVVPSPKIFGHRNRIDLAITKDGIGFRERGKWWKIVDIDECPVFGKTSREAIERLKEFIEEEKISVWNIKKDEGFLRYMVLREGKFTEEVMVNFVTKEGNLPDPTNYFDFDSIYWSVNRSKSDVSYGDIERFWGKEFIRERLDDVDYLIHPNSFFQTNSYQAVNLVRKVSELVEGEKILDMYSGVGTFGIYLAKRGFNVKGFDSNEFAIEMARRNVEINNVDAEFEVASDREVSVKGFDTVIVDPPRAGLHPRLVKRLNREKPGVIVYVSCNPETFARDVKMLDYRIDEIVALDMFPHTPHVELVAKLV.

[4Fe-4S] cluster-binding residues include cysteine 61, cysteine 67, cysteine 70, and cysteine 137. S-adenosyl-L-methionine is bound by residues glutamine 252, tyrosine 278, threonine 283, 299-300 (DS), aspartate 326, and aspartate 340. The active-site Nucleophile is the cysteine 367. Residue glutamate 399 is the Proton acceptor of the active site.

It belongs to the class I-like SAM-binding methyltransferase superfamily. RNA M5U methyltransferase family.

It carries out the reaction uridine(54) in tRNA + S-adenosyl-L-methionine = 5-methyluridine(54) in tRNA + S-adenosyl-L-homocysteine + H(+). Activated by magnesium ions. Catalyzes the formation of 5-methyl-uridine at position 54 (m5U54) in tRNA. The polypeptide is tRNA (uracil(54)-C(5))-methyltransferase (Pyrococcus abyssi (strain GE5 / Orsay)).